The chain runs to 551 residues: Palmdelphin (551 aa).

Position 1 is an N-acetylmethionine (methionine 1). Residues 12 to 106 (QAITDKRKIQ…LQISTKEEAI (95 aa)) adopt a coiled-coil conformation. Residue lysine 125 forms a Glycyl lysine isopeptide (Lys-Gly) (interchain with G-Cter in SUMO2) linkage. Serine 135 bears the Phosphoserine mark. Lysine 179 participates in a covalent cross-link: Glycyl lysine isopeptide (Lys-Gly) (interchain with G-Cter in SUMO1); alternate. Residue lysine 179 forms a Glycyl lysine isopeptide (Lys-Gly) (interchain with G-Cter in SUMO2); alternate linkage. Basic and acidic residues predominate over residues 248–259 (ERNSKSPTEYHE). The segment at 248–280 (ERNSKSPTEYHEPVYANPFYRPTTPQRETVTPG) is disordered. Positions 270 to 280 (TTPQRETVTPG) are enriched in polar residues. Threonine 271 carries the phosphothreonine modification. Phosphoserine occurs at positions 321, 370, 384, and 385. 2 disordered regions span residues 342–392 (TPQK…QEDE) and 449–535 (DEEE…EDPS). The span at 484–495 (KRSEASPHENTN) shows a compositional bias: basic and acidic residues. A phosphoserine mark is found at serine 498, serine 515, and serine 520.

Belongs to the paralemmin family. As to quaternary structure, interacts with GLUL. Post-translationally, phosphorylated. In terms of tissue distribution, ubiquitous. Most abundant in cardiac and skeletal muscle.

It is found in the cytoplasm. Its subcellular location is the cell projection. It localises to the dendrite. The protein localises to the dendritic spine. The sequence is that of Palmdelphin (PALMD) from Homo sapiens (Human).